Here is a 349-residue protein sequence, read N- to C-terminus: Cobalt-precorrin-5B C(1)-methyltransferase (349 aa).

The protein belongs to the CbiD family.

The enzyme catalyses Co-precorrin-5B + S-adenosyl-L-methionine = Co-precorrin-6A + S-adenosyl-L-homocysteine. It functions in the pathway cofactor biosynthesis; adenosylcobalamin biosynthesis; cob(II)yrinate a,c-diamide from sirohydrochlorin (anaerobic route): step 6/10. Functionally, catalyzes the methylation of C-1 in cobalt-precorrin-5B to form cobalt-precorrin-6A. The protein is Cobalt-precorrin-5B C(1)-methyltransferase of Saccharolobus islandicus (strain Y.N.15.51 / Yellowstone #2) (Sulfolobus islandicus).